The following is a 213-amino-acid chain: Pyridoxine/pyridoxamine 5'-phosphate oxidase (213 aa).

Residues 60–65 (RMVLMK), 75–76 (YS), Lys82, and Gln104 each bind FMN. Substrate is bound at residue Lys65. Substrate is bound by residues Tyr122 and Arg126. FMN contacts are provided by residues 139–140 (QS) and Trp184. 190-192 (RLH) contacts substrate. Arg194 is a binding site for FMN.

Belongs to the pyridoxamine 5'-phosphate oxidase family. As to quaternary structure, homodimer. FMN serves as cofactor.

It catalyses the reaction pyridoxamine 5'-phosphate + O2 + H2O = pyridoxal 5'-phosphate + H2O2 + NH4(+). The enzyme catalyses pyridoxine 5'-phosphate + O2 = pyridoxal 5'-phosphate + H2O2. The protein operates within cofactor metabolism; pyridoxal 5'-phosphate salvage; pyridoxal 5'-phosphate from pyridoxamine 5'-phosphate: step 1/1. It participates in cofactor metabolism; pyridoxal 5'-phosphate salvage; pyridoxal 5'-phosphate from pyridoxine 5'-phosphate: step 1/1. Its function is as follows. Catalyzes the oxidation of either pyridoxine 5'-phosphate (PNP) or pyridoxamine 5'-phosphate (PMP) into pyridoxal 5'-phosphate (PLP). This chain is Pyridoxine/pyridoxamine 5'-phosphate oxidase, found in Bradyrhizobium diazoefficiens (strain JCM 10833 / BCRC 13528 / IAM 13628 / NBRC 14792 / USDA 110).